A 124-amino-acid polypeptide reads, in one-letter code: MELTSEEYEELRGLLGTPDIGNADTLKKAFLKACKVHHPDKGGNEEAMKRLLYLYNKAKIAASATTSQVWYFLIIGYISLKNKNIYLPKIFWLRFQNMAPHSGNSGGKNSIKALMSKICIVMRN.

In terms of domain architecture, J spans Glu-10–Gln-96.

The protein localises to the host cytoplasm. The protein resides in the host nucleus. Promotes efficient viral genome replication by accelerating both G1 and S phase progression of the cell cycle. This is Small t antigen from Bos taurus (Bovine).